A 124-amino-acid chain; its full sequence is Thioredoxin domain-containing protein C21C3.12c (124 aa).

In terms of domain architecture, Thioredoxin spans 37–124 (PWCPTVRAAL…ANKFSKFIDI (88 aa)). Cys39 serves as the catalytic Nucleophile.

The protein belongs to the thioredoxin family.

The protein resides in the cytoplasm. Its subcellular location is the nucleus. The protein is Thioredoxin domain-containing protein C21C3.12c of Schizosaccharomyces pombe (strain 972 / ATCC 24843) (Fission yeast).